A 295-amino-acid polypeptide reads, in one-letter code: Pyridoxal 5'-phosphate synthase subunit PdxS (295 aa).

Asp-25 contacts D-ribose 5-phosphate. Lys-82 serves as the catalytic Schiff-base intermediate with D-ribose 5-phosphate. D-ribose 5-phosphate is bound at residue Gly-154. Arg-166 is a D-glyceraldehyde 3-phosphate binding site. Residues Gly-215 and Gly-236–Ser-237 each bind D-ribose 5-phosphate.

Belongs to the PdxS/SNZ family. As to quaternary structure, in the presence of PdxT, forms a dodecamer of heterodimers.

It carries out the reaction aldehydo-D-ribose 5-phosphate + D-glyceraldehyde 3-phosphate + L-glutamine = pyridoxal 5'-phosphate + L-glutamate + phosphate + 3 H2O + H(+). Its pathway is cofactor biosynthesis; pyridoxal 5'-phosphate biosynthesis. Catalyzes the formation of pyridoxal 5'-phosphate from ribose 5-phosphate (RBP), glyceraldehyde 3-phosphate (G3P) and ammonia. The ammonia is provided by the PdxT subunit. Can also use ribulose 5-phosphate and dihydroxyacetone phosphate as substrates, resulting from enzyme-catalyzed isomerization of RBP and G3P, respectively. This is Pyridoxal 5'-phosphate synthase subunit PdxS from Listeria innocua serovar 6a (strain ATCC BAA-680 / CLIP 11262).